Consider the following 88-residue polypeptide: Cell division topological specificity factor (88 aa).

The protein belongs to the MinE family.

Prevents the cell division inhibition by proteins MinC and MinD at internal division sites while permitting inhibition at polar sites. This ensures cell division at the proper site by restricting the formation of a division septum at the midpoint of the long axis of the cell. The polypeptide is Cell division topological specificity factor (Clostridium botulinum (strain Alaska E43 / Type E3)).